A 295-amino-acid chain; its full sequence is Defective in cullin neddylation protein AAR3 (295 aa).

Residues 1 to 180 (MDSSPVSARF…LIDDFVEHMY (180 aa)) form the DCUN1 domain. The Nuclear localization signal motif lies at 214–221 (YRRPHTGL). The tract at residues 214–251 (YRRPHTGLRNIPGLKRKTSKKNDEEEEDEDEEVLETQN) is disordered. A compositionally biased stretch (acidic residues) spans 237-247 (EEEEDEDEEVL).

Its subcellular location is the nucleus. Functionally, may contribute to the neddylation of all cullins by transferring NEDD8 from N-terminally acetylated NEDD8-conjugating E2s enzyme to different cullin C-terminal domain-RBX complexes; neddylation of cullins play an essential role in the regulation of SCF-type complexes activity. Regulates responses to the synthetic auxin 2,4-dichlorophenoxyacetic acid (2,4-D) in roots, probably by modulating the SCF(TIR1) ubiquitin E3 ligase complex-mediated proteolysis. The sequence is that of Defective in cullin neddylation protein AAR3 from Arabidopsis thaliana (Mouse-ear cress).